We begin with the raw amino-acid sequence, 335 residues long: Beta-ketoacyl-[acyl-carrier-protein] synthase III (335 aa).

Residues Cys-120 and His-261 contribute to the active site. The tract at residues Gln-262–Arg-266 is ACP-binding. Asn-291 is an active-site residue.

This sequence belongs to the thiolase-like superfamily. FabH family. In terms of assembly, homodimer.

Its subcellular location is the cytoplasm. It catalyses the reaction malonyl-[ACP] + acetyl-CoA + H(+) = 3-oxobutanoyl-[ACP] + CO2 + CoA. It functions in the pathway lipid metabolism; fatty acid biosynthesis. Functionally, catalyzes the condensation reaction of fatty acid synthesis by the addition to an acyl acceptor of two carbons from malonyl-ACP. Catalyzes the first condensation reaction which initiates fatty acid synthesis and may therefore play a role in governing the total rate of fatty acid production. Possesses both acetoacetyl-ACP synthase and acetyl transacylase activities. Its substrate specificity determines the biosynthesis of branched-chain and/or straight-chain of fatty acids. In Chlamydia pneumoniae (Chlamydophila pneumoniae), this protein is Beta-ketoacyl-[acyl-carrier-protein] synthase III.